A 500-amino-acid chain; its full sequence is Probable cytosol aminopeptidase (500 aa).

Positions 274 and 279 each coordinate Mn(2+). Lys286 is an active-site residue. Residues Asp297, Asp356, and Glu358 each contribute to the Mn(2+) site. Arg360 is an active-site residue.

It belongs to the peptidase M17 family. Mn(2+) serves as cofactor.

The protein localises to the cytoplasm. The catalysed reaction is Release of an N-terminal amino acid, Xaa-|-Yaa-, in which Xaa is preferably Leu, but may be other amino acids including Pro although not Arg or Lys, and Yaa may be Pro. Amino acid amides and methyl esters are also readily hydrolyzed, but rates on arylamides are exceedingly low.. It catalyses the reaction Release of an N-terminal amino acid, preferentially leucine, but not glutamic or aspartic acids.. Its function is as follows. Presumably involved in the processing and regular turnover of intracellular proteins. Catalyzes the removal of unsubstituted N-terminal amino acids from various peptides. The chain is Probable cytosol aminopeptidase from Saccharophagus degradans (strain 2-40 / ATCC 43961 / DSM 17024).